A 460-amino-acid chain; its full sequence is Cysteine--tRNA ligase (460 aa).

Cys-28 provides a ligand contact to Zn(2+). Residues 30–40 (MTVYDYCHLGH) carry the 'HIGH' region motif. Cys-209, His-234, and Glu-238 together coordinate Zn(2+). A 'KMSKS' region motif is present at residues 266–270 (KMSKS). Lys-269 is a binding site for ATP.

It belongs to the class-I aminoacyl-tRNA synthetase family. In terms of assembly, monomer. Zn(2+) is required as a cofactor.

Its subcellular location is the cytoplasm. The enzyme catalyses tRNA(Cys) + L-cysteine + ATP = L-cysteinyl-tRNA(Cys) + AMP + diphosphate. The protein is Cysteine--tRNA ligase of Pseudomonas putida (strain GB-1).